The chain runs to 501 residues: Glycosyltransferase family 92 protein F13G3.3 (501 aa).

The helical transmembrane segment at 10–30 (LSVVLLFSFLFFVTAVLLQFI) threads the bilayer. The GT92 domain occupies 151 to 439 (KPVVMCISPL…ISDCYKQSYY (289 aa)).

It belongs to the glycosyltransferase 92 family.

It localises to the membrane. In Caenorhabditis elegans, this protein is Glycosyltransferase family 92 protein F13G3.3.